A 234-amino-acid chain; its full sequence is Triosephosphate isomerase (234 aa).

8–10 (NFK) contacts substrate. The Electrophile role is filled by histidine 90. The Proton acceptor role is filled by glutamate 159. Substrate contacts are provided by glycine 165 and serine 197.

This sequence belongs to the triosephosphate isomerase family. Homodimer.

It is found in the cytoplasm. It carries out the reaction D-glyceraldehyde 3-phosphate = dihydroxyacetone phosphate. The protein operates within carbohydrate biosynthesis; gluconeogenesis. It participates in carbohydrate degradation; glycolysis; D-glyceraldehyde 3-phosphate from glycerone phosphate: step 1/1. In terms of biological role, involved in the gluconeogenesis. Catalyzes stereospecifically the conversion of dihydroxyacetone phosphate (DHAP) to D-glyceraldehyde-3-phosphate (G3P). This Helicobacter pylori (strain J99 / ATCC 700824) (Campylobacter pylori J99) protein is Triosephosphate isomerase.